Here is a 477-residue protein sequence, read N- to C-terminus: Probable cytosolic Fe-S cluster assembly factor GG21400 (477 aa).

[4Fe-4S] cluster is bound by residues Cys-23, Cys-68, Cys-71, Cys-74, Cys-187, Cys-243, Cys-395, and Cys-399.

Belongs to the NARF family.

In terms of biological role, component of the cytosolic iron-sulfur (Fe/S) protein assembly machinery. Required for maturation of extramitochondrial Fe/S proteins. The protein is Probable cytosolic Fe-S cluster assembly factor GG21400 of Drosophila erecta (Fruit fly).